Here is a 392-residue protein sequence, read N- to C-terminus: Tryptophan synthase beta chain 1 (392 aa).

K85 carries the N6-(pyridoxal phosphate)lysine modification.

This sequence belongs to the TrpB family. Tetramer of two alpha and two beta chains. Pyridoxal 5'-phosphate is required as a cofactor.

It carries out the reaction (1S,2R)-1-C-(indol-3-yl)glycerol 3-phosphate + L-serine = D-glyceraldehyde 3-phosphate + L-tryptophan + H2O. Its pathway is amino-acid biosynthesis; L-tryptophan biosynthesis; L-tryptophan from chorismate: step 5/5. Functionally, the beta subunit is responsible for the synthesis of L-tryptophan from indole and L-serine. The protein is Tryptophan synthase beta chain 1 (trpB1) of Methanothermobacter thermautotrophicus (strain ATCC 29096 / DSM 1053 / JCM 10044 / NBRC 100330 / Delta H) (Methanobacterium thermoautotrophicum).